The chain runs to 208 residues: MARYTGSVCRLCRREGLKLYLKGDRCYTPKCAIDRRSYAPGQHGQGRKKVSEYGLQLREKQKARRIYGILESQFRRYFEKAERQPGITGENLLRLLERRLDNVIYRLGLGASRNEARQLVRHGHFTVNGRRVNIPSYLVKPGDVIAVRDQSKESPRIKELLERAADRTPPAWLEYEADQARARVAALPARDQIDAPVQEHLIVELYSR.

In terms of domain architecture, S4 RNA-binding spans 98-161; it reads RRLDNVIYRL…KESPRIKELL (64 aa).

It belongs to the universal ribosomal protein uS4 family. In terms of assembly, part of the 30S ribosomal subunit. Contacts protein S5. The interaction surface between S4 and S5 is involved in control of translational fidelity.

One of the primary rRNA binding proteins, it binds directly to 16S rRNA where it nucleates assembly of the body of the 30S subunit. Its function is as follows. With S5 and S12 plays an important role in translational accuracy. The polypeptide is Small ribosomal subunit protein uS4 (Pelotomaculum thermopropionicum (strain DSM 13744 / JCM 10971 / SI)).